The primary structure comprises 288 residues: Shikimate dehydrogenase (NADP(+)) (288 aa).

Shikimate-binding positions include 22-24 (SLS) and threonine 69. Lysine 73 acts as the Proton acceptor in catalysis. The shikimate site is built by asparagine 94 and aspartate 110. NADP(+) is bound by residues 131-135 (GSGGA) and leucine 228. A shikimate-binding site is contributed by tyrosine 230. Glycine 251 contributes to the NADP(+) binding site.

The protein belongs to the shikimate dehydrogenase family. Homodimer.

It carries out the reaction shikimate + NADP(+) = 3-dehydroshikimate + NADPH + H(+). The protein operates within metabolic intermediate biosynthesis; chorismate biosynthesis; chorismate from D-erythrose 4-phosphate and phosphoenolpyruvate: step 4/7. Functionally, involved in the biosynthesis of the chorismate, which leads to the biosynthesis of aromatic amino acids. Catalyzes the reversible NADPH linked reduction of 3-dehydroshikimate (DHSA) to yield shikimate (SA). The chain is Shikimate dehydrogenase (NADP(+)) from Synechococcus sp. (strain JA-2-3B'a(2-13)) (Cyanobacteria bacterium Yellowstone B-Prime).